The sequence spans 279 residues: Large ribosomal subunit protein uL2 (279 aa).

Disordered stretches follow at residues 34-58 (LRPL…GGGH) and 225-279 (VMNP…KNKR). Over residues 251–268 (GKPEGRTRRPNKESDKLI) the composition is skewed to basic and acidic residues. Positions 269–279 (VRRRRTGKNKR) are enriched in basic residues.

This sequence belongs to the universal ribosomal protein uL2 family. Part of the 50S ribosomal subunit. Forms a bridge to the 30S subunit in the 70S ribosome.

In terms of biological role, one of the primary rRNA binding proteins. Required for association of the 30S and 50S subunits to form the 70S ribosome, for tRNA binding and peptide bond formation. It has been suggested to have peptidyltransferase activity; this is somewhat controversial. Makes several contacts with the 16S rRNA in the 70S ribosome. In Micrococcus luteus (strain ATCC 4698 / DSM 20030 / JCM 1464 / CCM 169 / CCUG 5858 / IAM 1056 / NBRC 3333 / NCIMB 9278 / NCTC 2665 / VKM Ac-2230) (Micrococcus lysodeikticus), this protein is Large ribosomal subunit protein uL2.